Here is a 730-residue protein sequence, read N- to C-terminus: uncharacterized protein (730 aa).

2 positions are modified to phosphoserine: serine 82 and serine 89. Disordered stretches follow at residues serine 82–tyrosine 114 and asparagine 447–glutamate 468. The segment covering serine 89–asparagine 98 has biased composition (polar residues). Positions asparagine 449–asparagine 460 are enriched in low complexity. Residues serine 483 and serine 651 each carry the phosphoserine modification.

This is an uncharacterized protein from Saccharomyces cerevisiae (strain ATCC 204508 / S288c) (Baker's yeast).